We begin with the raw amino-acid sequence, 226 residues long: NADH-ubiquinone oxidoreductase chain 6 (226 aa).

The next 5 membrane-spanning stretches (helical) occupy residues 2–22 (STLG…LVIL), 28–48 (IYSI…LLTV), 56–76 (IYIL…VMMI), 90–110 (YNIY…ILIT), and 169–189 (IWFI…IYIT).

Belongs to the complex I subunit 6 family.

It is found in the mitochondrion membrane. It carries out the reaction a ubiquinone + NADH + 5 H(+)(in) = a ubiquinol + NAD(+) + 4 H(+)(out). Core subunit of the mitochondrial membrane respiratory chain NADH dehydrogenase (Complex I) that is believed to belong to the minimal assembly required for catalysis. Complex I functions in the transfer of electrons from NADH to the respiratory chain. The immediate electron acceptor for the enzyme is believed to be ubiquinone. This is NADH-ubiquinone oxidoreductase chain 6 (nad6) from Dictyostelium discoideum (Social amoeba).